The sequence spans 245 residues: Dehydrogenase/reductase SDR family member 6 (245 aa).

Residues 16 to 18 (QGI), aspartate 37, and aspartate 58 contribute to the NAD(+) site. Arginine 144 is a substrate binding site. Tyrosine 147 functions as the Proton acceptor in the catalytic mechanism. Residues lysine 151 and 180-184 (VDTPS) each bind NAD(+). Positions 188 and 205 each coordinate substrate.

This sequence belongs to the short-chain dehydrogenases/reductases (SDR) family. Homotetramer.

It is found in the cytoplasm. It catalyses the reaction cis-4-hydroxy-L-proline + NAD(+) = 4-oxo-L-proline + NADH + H(+). The catalysed reaction is (R)-3-hydroxybutanoate + NAD(+) = acetoacetate + NADH + H(+). It participates in amino-acid metabolism. Its pathway is siderophore biosynthesis. Functionally, NAD(H)-dependent dehydrogenase/reductase with a preference for cyclic substrates. Catalyzes stereoselective conversion of 4-oxo-L-proline to cis-4-hydroxy-L-proline, likely a detoxification mechanism for ketoprolines. Mediates the formation of 2,5-dihydroxybenzoate (2,5-DHBA), a siderophore that chelates free cytoplasmic iron and associates with LCN2, thereby regulating iron transport and homeostasis while protecting cells against free radical-induced oxidative stress. The iron-siderophore complex is imported into mitochondria, providing an iron source for mitochondrial metabolic processes in particular heme synthesis. May act as a 3-hydroxybutyrate dehydrogenase. This Rattus norvegicus (Rat) protein is Dehydrogenase/reductase SDR family member 6.